The sequence spans 413 residues: ATP-dependent RNA helicase RhlB (413 aa).

The Q motif motif lies at 9–37 (QRFADLPLHPQILAALNDQNFEYCTPIQA). One can recognise a Helicase ATP-binding domain in the interval 40–217 (LPLTLQGKDV…FEDMNDPEYI (178 aa)). Position 53–60 (53–60 (AQTGTGKT)) interacts with ATP. A DEAD box motif is present at residues 163–166 (DEAD). One can recognise a Helicase C-terminal domain in the interval 241-388 (KMALLMTLLE…VSQYDPDSLI (148 aa)).

Belongs to the DEAD box helicase family. RhlB subfamily. In terms of assembly, component of the RNA degradosome, which is a multiprotein complex involved in RNA processing and mRNA degradation.

The protein localises to the cytoplasm. It catalyses the reaction ATP + H2O = ADP + phosphate + H(+). Its function is as follows. DEAD-box RNA helicase involved in RNA degradation. Has RNA-dependent ATPase activity and unwinds double-stranded RNA. This is ATP-dependent RNA helicase RhlB from Actinobacillus succinogenes (strain ATCC 55618 / DSM 22257 / CCUG 43843 / 130Z).